Consider the following 463-residue polypeptide: uncharacterized protein (463 aa).

An HTH gntR-type domain is found at 13 to 81 (IPLYQQLYRY…PRSGWFADYH (69 aa)). Positions 41–60 (KRLLANQLSISQTTVERAYE) form a DNA-binding region, H-T-H motif. Position 308 is an N6-(pyridoxal phosphate)lysine (lysine 308).

In the C-terminal section; belongs to the class-I pyridoxal-phosphate-dependent aminotransferase family. The cofactor is pyridoxal 5'-phosphate.

This is an uncharacterized protein from Bacillus subtilis (strain 168).